A 329-amino-acid chain; its full sequence is MLSFFTKNTLTKRKLIMLALAIVFTFFAFGLYFIPHDEISVFDFKLPALQYETTVTSLDNFLIGGSTTLYTATVNHEDLNEPKSHEIVMLLASDGNVGSFESNLLDDCFKNRIEYAKLQNYNFEFVNVSSLVVPPVWGKMPAILQTMRKYPSAKWIWWLDQDALIMNKNLSLQELFLSPAMLQKSLLREQPIINSFGEDNFRITPAAYSKEMIEQIQFLISQDHNGLNAGSFLVRNSRSIALLMDLLTDPSLADAGVVRHEQDLIGYFIQKHSQVASMVGILPQRFINAFHEGPPTMQWQEGDLALHFAGCWVENKCAELWTKYKDKII.

The Cytoplasmic segment spans residues 1-14 (MLSFFTKNTLTKRK). Residues 15 to 35 (LIMLALAIVFTFFAFGLYFIP) traverse the membrane as a helical; Signal-anchor for type II membrane protein segment. Residues 36 to 329 (HDEISVFDFK…LWTKYKDKII (294 aa)) are Lumenal-facing. N-linked (GlcNAc...) asparagine glycans are attached at residues Asn127 and Asn169.

The protein belongs to the glycosyltransferase 34 family.

Its subcellular location is the golgi apparatus membrane. This is Probable alpha-1,2-galactosyltransferase gmh1 (gmh1) from Schizosaccharomyces pombe (strain 972 / ATCC 24843) (Fission yeast).